Consider the following 156-residue polypeptide: Cell division protein SepF (156 aa).

Residues 30 to 49 form a disordered region; the sequence is NAAAPSTTETSVVRQDDRPK.

This sequence belongs to the SepF family. As to quaternary structure, homodimer. Interacts with FtsZ.

The protein localises to the cytoplasm. In terms of biological role, cell division protein that is part of the divisome complex and is recruited early to the Z-ring. Probably stimulates Z-ring formation, perhaps through the cross-linking of FtsZ protofilaments. Its function overlaps with FtsA. The protein is Cell division protein SepF of Exiguobacterium sp. (strain ATCC BAA-1283 / AT1b).